We begin with the raw amino-acid sequence, 272 residues long: DKKIYALRDVTGTVQSIPLIASSIMSKKLATGSNCILLDVKCGNGAFMKDINEAKKLGKLMIEIGKKLNRKIAVEITNMQQPLGKTIGNKIEVLEAIDTLNGHGPKDFTEIIYSSGSTLLVLAQKAKDEVEARKMIDEVINNKKAYNKFLEWISRQGGNIKVFEKDSKWFNPQYKQEIIASQSGYLKIKSRIDFGLVAMKLGAGRSKKEDSIDYEAGIYLNKSSNEYVNKGDVLFTMYSSKPINPELQKELLSAIEFSESKHDIQTVFAKLM.

The protein belongs to the thymidine/pyrimidine-nucleoside phosphorylase family. Homodimer.

It carries out the reaction thymidine + phosphate = 2-deoxy-alpha-D-ribose 1-phosphate + thymine. Its function is as follows. The enzymes which catalyze the reversible phosphorolysis of pyrimidine nucleosides are involved in the degradation of these compounds and in their utilization as carbon and energy sources, or in the rescue of pyrimidine bases for nucleotide synthesis. This is Thymidine phosphorylase (deoA) from Metamycoplasma hominis (Mycoplasma hominis).